A 465-amino-acid polypeptide reads, in one-letter code: Cysteine--tRNA ligase (465 aa).

A Zn(2+)-binding site is contributed by cysteine 28. Residues 30–40 (MTVYDYCHLGH) carry the 'HIGH' region motif. 3 residues coordinate Zn(2+): cysteine 209, histidine 234, and glutamate 238. Positions 266–270 (KMSKS) match the 'KMSKS' region motif. Residue lysine 269 participates in ATP binding.

It belongs to the class-I aminoacyl-tRNA synthetase family. As to quaternary structure, monomer. It depends on Zn(2+) as a cofactor.

The protein localises to the cytoplasm. The enzyme catalyses tRNA(Cys) + L-cysteine + ATP = L-cysteinyl-tRNA(Cys) + AMP + diphosphate. In Nitrosomonas europaea (strain ATCC 19718 / CIP 103999 / KCTC 2705 / NBRC 14298), this protein is Cysteine--tRNA ligase.